We begin with the raw amino-acid sequence, 104 residues long: Large ribosomal subunit protein bL21 (104 aa).

It belongs to the bacterial ribosomal protein bL21 family. Part of the 50S ribosomal subunit. Contacts protein L20.

In terms of biological role, this protein binds to 23S rRNA in the presence of protein L20. This is Large ribosomal subunit protein bL21 from Desulfosudis oleivorans (strain DSM 6200 / JCM 39069 / Hxd3) (Desulfococcus oleovorans).